A 198-amino-acid chain; its full sequence is Sporulation cortex protein CoxA (198 aa).

Positions 1-21 (MGKKMTIASLILMTAGLTACG) are cleaved as a signal peptide. The tract at residues 91–115 (PLATDGTYNNTNNRNMNRNAANNGY) is disordered. The segment covering 95–115 (DGTYNNTNNRNMNRNAANNGY) has biased composition (low complexity).

The protein localises to the spore cortex. The polypeptide is Sporulation cortex protein CoxA (coxA) (Bacillus subtilis (strain 168)).